We begin with the raw amino-acid sequence, 686 residues long: Alpha-amylase 1 (686 aa).

Glu-125 (nucleophile) is an active-site residue. The active-site Proton donor is the Asp-216.

The protein belongs to the glycosyl hydrolase 57 family.

The protein localises to the cytoplasm. The catalysed reaction is Endohydrolysis of (1-&gt;4)-alpha-D-glucosidic linkages in polysaccharides containing three or more (1-&gt;4)-alpha-linked D-glucose units.. Functionally, this amylase is a highly liquefying-type: oligomers appeared at the beginning of incubation, followed by a graded decrease in the amounts of maltotriose, maltose and glucose in prolonged incubation. The chain is Alpha-amylase 1 (amyA) from Dictyoglomus thermophilum (strain ATCC 35947 / DSM 3960 / H-6-12).